The primary structure comprises 594 residues: Aspartate--tRNA(Asp/Asn) ligase (594 aa).

Position 173 (glutamate 173) interacts with L-aspartate. The interval 197-200 (QLFK) is aspartate. Arginine 219 contributes to the L-aspartate binding site. Residues 219–221 (RDE) and glutamine 228 each bind ATP. Histidine 449 is a binding site for L-aspartate. Residue glutamate 482 coordinates ATP. Position 489 (arginine 489) interacts with L-aspartate. ATP is bound at residue 534–537 (GLDR).

This sequence belongs to the class-II aminoacyl-tRNA synthetase family. Type 1 subfamily. As to quaternary structure, homodimer.

Its subcellular location is the cytoplasm. The catalysed reaction is tRNA(Asx) + L-aspartate + ATP = L-aspartyl-tRNA(Asx) + AMP + diphosphate. In terms of biological role, aspartyl-tRNA synthetase with relaxed tRNA specificity since it is able to aspartylate not only its cognate tRNA(Asp) but also tRNA(Asn). Reaction proceeds in two steps: L-aspartate is first activated by ATP to form Asp-AMP and then transferred to the acceptor end of tRNA(Asp/Asn). The chain is Aspartate--tRNA(Asp/Asn) ligase from Saccharophagus degradans (strain 2-40 / ATCC 43961 / DSM 17024).